Here is a 590-residue protein sequence, read N- to C-terminus: Selenoprotein N (590 aa).

The disordered stretch occupies residues 1-26 (MGRARPGQRGPPSPGPAAQPPAPPRR). The first 43 residues, 1-43 (MGRARPGQRGPPSPGPAAQPPAPPRRRARSLALLGALLAAAAA), serve as a signal peptide directing secretion. The segment covering 9–23 (RGPPSPGPAAQPPAP) has biased composition (pro residues). Residues 67-102 (TLGTDGLFLFSSLDTDGDMYISPEEFKPIAEKLTGS) form the EF-hand domain. Residue N126 is glycosylated (N-linked (GlcNAc...) asparagine). Residue U127 is a non-standard amino acid, selenocysteine. N190 carries N-linked (GlcNAc...) asparagine glycosylation. A non-standard amino acid (selenocysteine) is located at residue U462. N-linked (GlcNAc...) asparagine glycans are attached at residues N483, N505, and N531.

As to quaternary structure, interacts with RYR1, RYR2 and RYR3. In terms of processing, N-glycosylated. As to expression, isoform 1 and isoform 2 are expressed in skeletal muscle, brain, lung and placenta. Isoform 2 is also expressed in heart, diaphragm and stomach.

The protein resides in the endoplasmic reticulum membrane. Functionally, plays an important role in cell protection against oxidative stress and in the regulation of redox-related calcium homeostasis. Regulates the calcium level of the ER by protecting the calcium pump ATP2A2 against the oxidoreductase ERO1A-mediated oxidative damage. Within the ER, ERO1A activity increases the concentration of H(2)O(2), which attacks the luminal thiols in ATP2A2 and thus leads to cysteinyl sulfenic acid formation (-SOH) and SEPN1 reduces the SOH back to free thiol (-SH), thus restoring ATP2A2 activity. Acts as a modulator of ryanodine receptor (RyR) activity: protects RyR from oxidation due to increased oxidative stress, or directly controls the RyR redox state, regulating the RyR-mediated calcium mobilization required for normal muscle development and differentiation. Essential for muscle regeneration and satellite cell maintenance in skeletal muscle. This chain is Selenoprotein N, found in Homo sapiens (Human).